We begin with the raw amino-acid sequence, 147 residues long: Ribonuclease H (147 aa).

The RNase H type-1 domain occupies 1–142; sequence MAGKVVMYTD…ADELANRGVR (142 aa). Mg(2+) is bound by residues Asp-10, Glu-48, Asp-70, and Asp-134.

Belongs to the RNase H family. Monomer. Mg(2+) is required as a cofactor.

It is found in the cytoplasm. It catalyses the reaction Endonucleolytic cleavage to 5'-phosphomonoester.. Functionally, endonuclease that specifically degrades the RNA of RNA-DNA hybrids. This Marinobacter nauticus (strain ATCC 700491 / DSM 11845 / VT8) (Marinobacter aquaeolei) protein is Ribonuclease H.